We begin with the raw amino-acid sequence, 311 residues long: Protoheme IX farnesyltransferase (311 aa).

The next 9 helical transmembrane spans lie at 38 to 58, 62 to 82, 113 to 133, 134 to 154, 162 to 182, 188 to 208, 230 to 250, 251 to 271, and 286 to 306; these read IKVV…APDM, YFVQ…AAVI, LIFS…AANW, LTAQ…TMFL, IVIG…SETG, PWIL…ALAI, FTKT…FLPF, LIHM…IIFI, and ALNL…ALFA.

This sequence belongs to the UbiA prenyltransferase family. Protoheme IX farnesyltransferase subfamily.

The protein resides in the cell inner membrane. The catalysed reaction is heme b + (2E,6E)-farnesyl diphosphate + H2O = Fe(II)-heme o + diphosphate. The protein operates within porphyrin-containing compound metabolism; heme O biosynthesis; heme O from protoheme: step 1/1. Functionally, converts heme B (protoheme IX) to heme O by substitution of the vinyl group on carbon 2 of heme B porphyrin ring with a hydroxyethyl farnesyl side group. The protein is Protoheme IX farnesyltransferase of Psychromonas ingrahamii (strain DSM 17664 / CCUG 51855 / 37).